A 490-amino-acid chain; its full sequence is UDP-N-acetylmuramate--L-alanine ligase (490 aa).

126-132 provides a ligand contact to ATP; that stretch reads GTHGKTT.

This sequence belongs to the MurCDEF family.

The protein localises to the cytoplasm. The catalysed reaction is UDP-N-acetyl-alpha-D-muramate + L-alanine + ATP = UDP-N-acetyl-alpha-D-muramoyl-L-alanine + ADP + phosphate + H(+). It participates in cell wall biogenesis; peptidoglycan biosynthesis. Cell wall formation. This chain is UDP-N-acetylmuramate--L-alanine ligase, found in Baumannia cicadellinicola subsp. Homalodisca coagulata.